Here is a 350-residue protein sequence, read N- to C-terminus: MSTVQTVLGAITPNLLGRTLTHEHVALDFEHFFRPPPADFERELQAKISMSTLGYVRMYPYSSKENVRFYDEEALEAAKKDVLLYKKHGGGSIVENSSYGLKRNLEFIVDLAKSTGVHFIAGTGHYIHAVQDASHASLTVEQMSDLYSKDIITGIQVNGETVKCGFIGEVASVYPVHEFEKHSLQAAGEIQEVLGCGVSLHPHRVTNAPFEIMRLYMEAGGRANKCVMSHLDRTIFDIDELLEFAKLGCYMQYDLFGTECSYYQLNSTINMLSDGQRIDNLMKLIEEGLVDRLLMSHDIHTKHRLTSYGGHGYHHIHMNILPRMFAKGVTIEQVEQMTVTNPANWLAFNP.

A divalent metal cation-binding residues include H22, H24, E169, H201, H230, and D298.

Belongs to the metallo-dependent hydrolases superfamily. Phosphotriesterase family. A divalent metal cation serves as cofactor.

In Drosophila willistoni (Fruit fly), this protein is Phosphotriesterase-related protein.